The chain runs to 522 residues: Glucose-1-phosphate adenylyltransferase large subunit, chloroplastic/amyloplastic (522 aa).

A chloroplast-targeting transit peptide spans Met-1–Cys-62. A compositionally biased stretch (basic and acidic residues) spans Ser-28–Glu-42. The tract at residues Ser-28–Gly-54 is disordered.

Belongs to the bacterial/plant glucose-1-phosphate adenylyltransferase family. In terms of assembly, heterotetramer. Abundantly expressed in the whole grains, a slightly less abundant expression is seen in leaves, while a low level expression is seen in the roots. A greater expression is seen in the endosperm than in the embryo and pericarp layers.

It is found in the plastid. Its subcellular location is the chloroplast. It localises to the amyloplast. The enzyme catalyses alpha-D-glucose 1-phosphate + ATP + H(+) = ADP-alpha-D-glucose + diphosphate. It participates in glycan biosynthesis; starch biosynthesis. Its activity is regulated as follows. Insensitive to 3'phosphoglycerate and orthophosphate. This protein plays a role in synthesis of starch. It catalyzes the synthesis of the activated glycosyl donor, ADP-glucose from Glc-1-P and ATP. This is Glucose-1-phosphate adenylyltransferase large subunit, chloroplastic/amyloplastic (AGP-L) from Triticum aestivum (Wheat).